The primary structure comprises 127 residues: Small ribosomal subunit protein uS13 (127 aa).

The segment at 100 to 127 is disordered; it reads GQRTRTNARTRKGVRKTVAGKKKAPAKK. A compositionally biased stretch (basic residues) spans 101–127; sequence QRTRTNARTRKGVRKTVAGKKKAPAKK.

This sequence belongs to the universal ribosomal protein uS13 family. As to quaternary structure, part of the 30S ribosomal subunit. Forms a loose heterodimer with protein S19. Forms two bridges to the 50S subunit in the 70S ribosome.

Its function is as follows. Located at the top of the head of the 30S subunit, it contacts several helices of the 16S rRNA. In the 70S ribosome it contacts the 23S rRNA (bridge B1a) and protein L5 of the 50S subunit (bridge B1b), connecting the 2 subunits; these bridges are implicated in subunit movement. Contacts the tRNAs in the A and P-sites. This is Small ribosomal subunit protein uS13 from Synechococcus sp. (strain JA-3-3Ab) (Cyanobacteria bacterium Yellowstone A-Prime).